The following is a 34-amino-acid chain: Antimicrobial peptide Alo-2 (34 aa).

3 disulfide bridges follow: Cys1–Cys18, Cys8–Cys22, and Cys17–Cys33.

The protein localises to the secreted. Its function is as follows. Has antifungal activity against C.glabrata. The chain is Antimicrobial peptide Alo-2 from Acrocinus longimanus (Giant harlequin beetle).